A 342-amino-acid polypeptide reads, in one-letter code: Large ribosomal subunit protein uL3 (342 aa).

It belongs to the universal ribosomal protein uL3 family. Part of the 50S ribosomal subunit. Forms a cluster with proteins L14 and L24e.

One of the primary rRNA binding proteins, it binds directly near the 3'-end of the 23S rRNA, where it nucleates assembly of the 50S subunit. In Pyrobaculum islandicum (strain DSM 4184 / JCM 9189 / GEO3), this protein is Large ribosomal subunit protein uL3.